The primary structure comprises 166 residues: CDP-archaeol synthase (166 aa).

4 helical membrane-spanning segments follow: residues 42–62 (FFGG…AATA), 73–93 (FLSV…KSFL), 104–124 (SWFL…ILIF), and 128–148 (WLFG…TPLL).

Belongs to the CDP-archaeol synthase family. It depends on Mg(2+) as a cofactor.

It localises to the cell membrane. It carries out the reaction 2,3-bis-O-(geranylgeranyl)-sn-glycerol 1-phosphate + CTP + H(+) = CDP-2,3-bis-O-(geranylgeranyl)-sn-glycerol + diphosphate. Its pathway is membrane lipid metabolism; glycerophospholipid metabolism. Catalyzes the formation of CDP-2,3-bis-(O-geranylgeranyl)-sn-glycerol (CDP-archaeol) from 2,3-bis-(O-geranylgeranyl)-sn-glycerol 1-phosphate (DGGGP) and CTP. This reaction is the third ether-bond-formation step in the biosynthesis of archaeal membrane lipids. The chain is CDP-archaeol synthase from Methanoculleus marisnigri (strain ATCC 35101 / DSM 1498 / JR1).